The sequence spans 171 residues: 3-hydroxydecanoyl-[acyl-carrier-protein] dehydratase (171 aa).

The active site involves His-70.

The protein belongs to the thioester dehydratase family. FabA subfamily. Homodimer.

It localises to the cytoplasm. It carries out the reaction a (3R)-hydroxyacyl-[ACP] = a (2E)-enoyl-[ACP] + H2O. It catalyses the reaction (3R)-hydroxydecanoyl-[ACP] = (2E)-decenoyl-[ACP] + H2O. The catalysed reaction is (2E)-decenoyl-[ACP] = (3Z)-decenoyl-[ACP]. It functions in the pathway lipid metabolism; fatty acid biosynthesis. Functionally, necessary for the introduction of cis unsaturation into fatty acids. Catalyzes the dehydration of (3R)-3-hydroxydecanoyl-ACP to E-(2)-decenoyl-ACP and then its isomerization to Z-(3)-decenoyl-ACP. Can catalyze the dehydratase reaction for beta-hydroxyacyl-ACPs with saturated chain lengths up to 16:0, being most active on intermediate chain length. The sequence is that of 3-hydroxydecanoyl-[acyl-carrier-protein] dehydratase from Shewanella sp. (strain MR-4).